The chain runs to 204 residues: MSENALRLIASYVEEAAAARARFFTDHAELVDAAARTMAVALARGGKILFCGNGGSAADAQHLAAEFVNRFELERPPLPALALTTDSSALTAIGNDYGFDRVFAKQVQALAGPSDVVVGISTSGNSPNVLAALRAARDKGCVTVGLAGRNGAIVPLCDYALLVPSDRTAHIQEVHATIGHLLCKLVDHYLFEAVMELGPYLEDH.

The SIS domain occupies 38-199 (MAVALARGGK…LFEAVMELGP (162 aa)). Substrate is bound at residue 53–55 (NGG). 2 residues coordinate Zn(2+): H62 and E66. Residues E66, 95-96 (ND), 121-123 (STS), S126, and Q172 contribute to the substrate site. Zn(2+) is bound by residues Q172 and H180.

Belongs to the SIS family. GmhA subfamily. In terms of assembly, homotetramer. It depends on Zn(2+) as a cofactor.

The protein resides in the cytoplasm. It catalyses the reaction 2 D-sedoheptulose 7-phosphate = D-glycero-alpha-D-manno-heptose 7-phosphate + D-glycero-beta-D-manno-heptose 7-phosphate. The protein operates within carbohydrate biosynthesis; D-glycero-D-manno-heptose 7-phosphate biosynthesis; D-glycero-alpha-D-manno-heptose 7-phosphate and D-glycero-beta-D-manno-heptose 7-phosphate from sedoheptulose 7-phosphate: step 1/1. In terms of biological role, catalyzes the isomerization of sedoheptulose 7-phosphate in D-glycero-D-manno-heptose 7-phosphate. The protein is Phosphoheptose isomerase of Solidesulfovibrio magneticus (strain ATCC 700980 / DSM 13731 / RS-1) (Desulfovibrio magneticus).